The sequence spans 160 residues: Nucleotide-binding protein CJA_2652 (160 aa).

The protein belongs to the YajQ family.

Nucleotide-binding protein. This is Nucleotide-binding protein CJA_2652 from Cellvibrio japonicus (strain Ueda107) (Pseudomonas fluorescens subsp. cellulosa).